We begin with the raw amino-acid sequence, 132 residues long: Fatty acid-binding protein, intestinal (132 aa).

At alanine 2 the chain carries N-acetylalanine. Hexadecanoate contacts are provided by tryptophan 83 and arginine 107. The tetradecanoate site is built by tryptophan 83 and arginine 107.

The protein belongs to the calycin superfamily. Fatty-acid binding protein (FABP) family.

It localises to the cytoplasm. Functionally, FABPs are thought to play a role in the intracellular transport of long-chain fatty acids and their acyl-CoA esters. FABP2 is probably involved in triglyceride-rich lipoprotein synthesis. Binds saturated long-chain fatty acids with a high affinity, but binds with a lower affinity to unsaturated long-chain fatty acids. FABP2 may also help maintain energy homeostasis by functioning as a lipid sensor. The protein is Fatty acid-binding protein, intestinal (FABP2) of Bos taurus (Bovine).